Reading from the N-terminus, the 237-residue chain is Ribonuclease PH (237 aa).

Phosphate is bound by residues arginine 86 and 124 to 126 (GTR).

This sequence belongs to the RNase PH family. In terms of assembly, homohexameric ring arranged as a trimer of dimers.

The enzyme catalyses tRNA(n+1) + phosphate = tRNA(n) + a ribonucleoside 5'-diphosphate. Functionally, phosphorolytic 3'-5' exoribonuclease that plays an important role in tRNA 3'-end maturation. Removes nucleotide residues following the 3'-CCA terminus of tRNAs; can also add nucleotides to the ends of RNA molecules by using nucleoside diphosphates as substrates, but this may not be physiologically important. Probably plays a role in initiation of 16S rRNA degradation (leading to ribosome degradation) during starvation. The polypeptide is Ribonuclease PH (Tolumonas auensis (strain DSM 9187 / NBRC 110442 / TA 4)).